We begin with the raw amino-acid sequence, 154 residues long: Lipoprotein signal peptidase (154 aa).

Transmembrane regions (helical) follow at residues 8–28 (AFFL…YWAL), 36–56 (IVVN…AFSF), 66–86 (WLFA…LLTK), and 88–108 (HHWL…GNLY). Residues Asp-118 and Asp-136 contribute to the active site. A helical transmembrane segment spans residues 129 to 149 (WPVFNLADVAITLGVILMLIA).

Belongs to the peptidase A8 family.

The protein resides in the cell inner membrane. The catalysed reaction is Release of signal peptides from bacterial membrane prolipoproteins. Hydrolyzes -Xaa-Yaa-Zaa-|-(S,diacylglyceryl)Cys-, in which Xaa is hydrophobic (preferably Leu), and Yaa (Ala or Ser) and Zaa (Gly or Ala) have small, neutral side chains.. It functions in the pathway protein modification; lipoprotein biosynthesis (signal peptide cleavage). Functionally, this protein specifically catalyzes the removal of signal peptides from prolipoproteins. This is Lipoprotein signal peptidase from Dichelobacter nodosus (strain VCS1703A).